A 335-amino-acid chain; its full sequence is Phospho-N-acetylmuramoyl-pentapeptide-transferase (335 aa).

10 consecutive transmembrane segments (helical) span residues 3–23 (LTIL…PHFI), 53–73 (GGTV…LVYF), 78–98 (SLGL…IGFL), 118–138 (FTLQ…PSGI), 143–163 (VFGY…FWVV), 174–194 (GIDG…GVIA), 200–220 (FDVL…FLFN), 226–246 (IFMG…ISIA), 251–271 (WTLL…MLQV), and 314–334 (VDAF…AILY).

Belongs to the glycosyltransferase 4 family. MraY subfamily. The cofactor is Mg(2+).

Its subcellular location is the cell membrane. The catalysed reaction is UDP-N-acetyl-alpha-D-muramoyl-L-alanyl-gamma-D-glutamyl-L-lysyl-D-alanyl-D-alanine + di-trans,octa-cis-undecaprenyl phosphate = Mur2Ac(oyl-L-Ala-gamma-D-Glu-L-Lys-D-Ala-D-Ala)-di-trans,octa-cis-undecaprenyl diphosphate + UMP. Its pathway is cell wall biogenesis; peptidoglycan biosynthesis. In terms of biological role, catalyzes the initial step of the lipid cycle reactions in the biosynthesis of the cell wall peptidoglycan: transfers peptidoglycan precursor phospho-MurNAc-pentapeptide from UDP-MurNAc-pentapeptide onto the lipid carrier undecaprenyl phosphate, yielding undecaprenyl-pyrophosphoryl-MurNAc-pentapeptide, known as lipid I. This Streptococcus equi subsp. zooepidemicus (strain MGCS10565) protein is Phospho-N-acetylmuramoyl-pentapeptide-transferase.